The following is a 693-amino-acid chain: Polyribonucleotide nucleotidyltransferase (693 aa).

Mg(2+) is bound by residues Asp-485 and Asp-491. Residues 552–611 (PRIETMQINTSKIATVIGPGGKQIRQIIERSGAQVDINDNGLINISANTQESIDKAKELI) enclose the KH domain. Positions 621–689 (GKIYNGRVTS…EKGQLKLSHK (69 aa)) constitute an S1 motif domain.

This sequence belongs to the polyribonucleotide nucleotidyltransferase family. Requires Mg(2+) as cofactor.

It is found in the cytoplasm. The catalysed reaction is RNA(n+1) + phosphate = RNA(n) + a ribonucleoside 5'-diphosphate. Its function is as follows. Involved in mRNA degradation. Catalyzes the phosphorolysis of single-stranded polyribonucleotides processively in the 3'- to 5'-direction. This Chlamydia muridarum (strain MoPn / Nigg) protein is Polyribonucleotide nucleotidyltransferase.